We begin with the raw amino-acid sequence, 217 residues long: Adenylate kinase (217 aa).

10 to 15 provides a ligand contact to ATP; that stretch reads GAGKGT. Residues 30-59 are NMP; the sequence is STGDMFRAAMKEGTPLGLQAKEYIDRGDLV. AMP contacts are provided by residues T31, R36, 57–59, 85–88, and Q92; these read DLV and GFPR. Residues 126-163 form an LID region; sequence GRRICRNCGATYHLVFHPPAQPGVCDKCGGELYQRPDD. ATP is bound at residue R127. The Zn(2+) site is built by C130 and C133. Position 136-137 (136-137) interacts with ATP; sequence TY. Positions 150 and 153 each coordinate Zn(2+). AMP is bound by residues R160 and R171. Q199 serves as a coordination point for ATP.

The protein belongs to the adenylate kinase family. Monomer.

The protein resides in the cytoplasm. The enzyme catalyses AMP + ATP = 2 ADP. It participates in purine metabolism; AMP biosynthesis via salvage pathway; AMP from ADP: step 1/1. Functionally, catalyzes the reversible transfer of the terminal phosphate group between ATP and AMP. Plays an important role in cellular energy homeostasis and in adenine nucleotide metabolism. This is Adenylate kinase from Geobacillus thermodenitrificans (strain NG80-2).